The sequence spans 340 residues: Chitinase 7 (340 aa).

The first 32 residues, 1 to 32 (MIAARAANLQVAMKALALAVLALAYAAATARA), serve as a signal peptide directing secretion. A Chitin-binding type-1 domain is found at 33–73 (EQCGRQAGGARCPNRLCCSRWGWCGLTDDYCKGGCQSQCRV). 7 disulfides stabilise this stretch: Cys-35–Cys-50, Cys-44–Cys-56, Cys-49–Cys-63, Cys-67–Cys-71, Cys-118–Cys-173, Cys-185–Cys-193, and Cys-293–Cys-323.

It belongs to the glycosyl hydrolase 19 family. Chitinase class I subfamily. As to expression, expressed in pistils, stamens and lodicules.

It catalyses the reaction Random endo-hydrolysis of N-acetyl-beta-D-glucosaminide (1-&gt;4)-beta-linkages in chitin and chitodextrins.. Hydrolyzes chitin and may play a role in defense against fungal pathogens containing chitin. The polypeptide is Chitinase 7 (Cht7) (Oryza sativa subsp. japonica (Rice)).